Reading from the N-terminus, the 519-residue chain is Pleckstrin homology domain-containing family A member 8 (519 aa).

The 93-residue stretch at 1-93 (MEGVLYKWTN…WLVALGSAKA (93 aa)) folds into the PH domain. The residue at position 139 (T139) is a Phosphothreonine. S145 is subject to Phosphoserine. The residue at position 153 (T153) is a Phosphothreonine. Residues 275-302 (GEENLESHDKDPAQPGSDSVCSPESPWE) form a disordered region. The interval 330-473 (IPTEAFLASC…EDFVAALTIK (144 aa)) is glycolipid transfer protein homology domain.

In terms of assembly, homodimer. Interacts with ARF1; the interaction together with phosphatidylinositol 4-phosphate binding is required for FAPP2 GlcCer transfer ability.

Its subcellular location is the golgi apparatus. It localises to the trans-Golgi network membrane. The protein resides in the membrane. In terms of biological role, cargo transport protein that is required for apical transport from the trans-Golgi network (TGN). Transports AQP2 from the trans-Golgi network (TGN) to sites of AQP2 phosphorylation. Mediates the non-vesicular transport of glucosylceramide (GlcCer) from the trans-Golgi network (TGN) to the plasma membrane and plays a pivotal role in the synthesis of complex glycosphingolipids. Binding of both phosphatidylinositol 4-phosphate (PIP) and ARF1 are essential for the GlcCer transfer ability. Also required for primary cilium formation, possibly by being involved in the transport of raft lipids to the apical membrane, and for membrane tubulation. The sequence is that of Pleckstrin homology domain-containing family A member 8 (Plekha8) from Mus musculus (Mouse).